A 171-amino-acid chain; its full sequence is Large ribosomal subunit protein uL10 (171 aa).

It belongs to the universal ribosomal protein uL10 family. In terms of assembly, part of the ribosomal stalk of the 50S ribosomal subunit. The N-terminus interacts with L11 and the large rRNA to form the base of the stalk. The C-terminus forms an elongated spine to which L12 dimers bind in a sequential fashion forming a multimeric L10(L12)X complex.

Its function is as follows. Forms part of the ribosomal stalk, playing a central role in the interaction of the ribosome with GTP-bound translation factors. The protein is Large ribosomal subunit protein uL10 of Lactococcus lactis subsp. cremoris (strain SK11).